Consider the following 311-residue polypeptide: MENLQLVLFVLGAIAIIAVLVHGFWSIRKQQPKSLKESPMSGFYKDQASVRDSQGFDADGIGEVRVRKEVPATDRQEKEDKPVQEPAFTAAPSRDVEDSRHEQAFALSDEPVQRAARQRQEPVLSMGANAKDDEVQMELGLGQDSQSSLFETVEQESVVEPTPEPEVKAEEPLGEPKDVLVLHVVANEGEELNGAELLPCLLSLNFKFGDMDIFHRHEDNAGTGKVLFSLANMVKPGVFNLDNMEQFTTEGVVLFMTLPCHGDPLMNFSIMLNSAHQLADDVGGRLLDGGREDWSESTKQLYLQRIRAQLD.

Residues 1-6 (MENLQL) lie on the Periplasmic side of the membrane. A helical transmembrane segment spans residues 7-27 (VLFVLGAIAIIAVLVHGFWSI). At 28-311 (RKQQPKSLKE…YLQRIRAQLD (284 aa)) the chain is on the cytoplasmic side. The segment at 46-114 (DQASVRDSQG…FALSDEPVQR (69 aa)) is disordered. Composition is skewed to basic and acidic residues over residues 62–83 (GEVR…DKPV) and 94–103 (RDVEDSRHEQ).

This sequence belongs to the ZipA family. As to quaternary structure, interacts with FtsZ via their C-terminal domains.

It localises to the cell inner membrane. Functionally, essential cell division protein that stabilizes the FtsZ protofilaments by cross-linking them and that serves as a cytoplasmic membrane anchor for the Z ring. Also required for the recruitment to the septal ring of downstream cell division proteins. This Shewanella woodyi (strain ATCC 51908 / MS32) protein is Cell division protein ZipA.